Reading from the N-terminus, the 306-residue chain is uncharacterized protein (306 aa).

Helical transmembrane passes span 13 to 33, 53 to 73, 86 to 106, 112 to 132, 147 to 167, 177 to 197, 214 to 234, 246 to 268, and 272 to 294; these read VLLSQFLNGYEWAVPWIFAFI, PLPMILALFVLHIFMPLFAWG, ITGLTLAVVIPTGITSLIWAA, VGLTLSIILVDTVLSPLIVPL, WGMMKGLIVMVVIPSFLGMLF, AFVSSALSPFSKLCLMAVIAI, AGIAVTVFFIALTGYAAAWLI, VSLIFTGGMRNISAGAVLAVTFF, and VAVPVVIGMLFQQILAALFGYML.

The protein resides in the cell membrane. This is an uncharacterized protein from Bacillus subtilis (strain 168).